The primary structure comprises 1377 residues: DNA-directed RNA polymerase subunit beta'' (1377 aa).

The Zn(2+) site is built by C224, C294, C301, and C304.

The protein belongs to the RNA polymerase beta' chain family. RpoC2 subfamily. In plastids the minimal PEP RNA polymerase catalytic core is composed of four subunits: alpha, beta, beta', and beta''. When a (nuclear-encoded) sigma factor is associated with the core the holoenzyme is formed, which can initiate transcription. The cofactor is Zn(2+).

The protein localises to the plastid. It is found in the chloroplast. It catalyses the reaction RNA(n) + a ribonucleoside 5'-triphosphate = RNA(n+1) + diphosphate. Functionally, DNA-dependent RNA polymerase catalyzes the transcription of DNA into RNA using the four ribonucleoside triphosphates as substrates. This is DNA-directed RNA polymerase subunit beta'' from Calycanthus floridus var. glaucus (Eastern sweetshrub).